We begin with the raw amino-acid sequence, 121 residues long: MSLTNEQIVDAIAEKSLMEVMELVKAIEEKFGVSAAAPVAAAAAGPAAVVEEQTEFNVVLTNCGTNKVGVIKAVRAVTGLGLKEAKDLTEAGGMLKEGASKDEAEKIKKELTEAGATVEIK.

Belongs to the bacterial ribosomal protein bL12 family. Homodimer. Part of the ribosomal stalk of the 50S ribosomal subunit. Forms a multimeric L10(L12)X complex, where L10 forms an elongated spine to which 2 to 4 L12 dimers bind in a sequential fashion. Binds GTP-bound translation factors.

In terms of biological role, forms part of the ribosomal stalk which helps the ribosome interact with GTP-bound translation factors. Is thus essential for accurate translation. The sequence is that of Large ribosomal subunit protein bL12 from Xanthomonas axonopodis pv. citri (strain 306).